Here is a 313-residue protein sequence, read N- to C-terminus: Ribosomal RNA small subunit methyltransferase H (313 aa).

S-adenosyl-L-methionine contacts are provided by residues 35 to 37, aspartate 55, phenylalanine 79, aspartate 100, and glutamine 107; that span reads GGH.

It belongs to the methyltransferase superfamily. RsmH family.

Its subcellular location is the cytoplasm. The enzyme catalyses cytidine(1402) in 16S rRNA + S-adenosyl-L-methionine = N(4)-methylcytidine(1402) in 16S rRNA + S-adenosyl-L-homocysteine + H(+). In terms of biological role, specifically methylates the N4 position of cytidine in position 1402 (C1402) of 16S rRNA. The protein is Ribosomal RNA small subunit methyltransferase H of Burkholderia orbicola (strain AU 1054).